A 579-amino-acid chain; its full sequence is V-type ATP synthase alpha chain (579 aa).

An ATP-binding site is contributed by 227–234 (GGFGTGKT).

The protein belongs to the ATPase alpha/beta chains family.

The catalysed reaction is ATP + H2O + 4 H(+)(in) = ADP + phosphate + 5 H(+)(out). Produces ATP from ADP in the presence of a proton gradient across the membrane. The V-type alpha chain is a catalytic subunit. The polypeptide is V-type ATP synthase alpha chain (Anaeromyxobacter dehalogenans (strain 2CP-1 / ATCC BAA-258)).